Reading from the N-terminus, the 1401-residue chain is DNA polymerase III PolC-type (1401 aa).

An Exonuclease domain is found at 388–543 (FVVFDIETTG…EDAKATAEIF (156 aa)).

It belongs to the DNA polymerase type-C family. PolC subfamily.

It localises to the cytoplasm. The catalysed reaction is DNA(n) + a 2'-deoxyribonucleoside 5'-triphosphate = DNA(n+1) + diphosphate. Required for replicative DNA synthesis. This DNA polymerase also exhibits 3' to 5' exonuclease activity. This Caldanaerobacter subterraneus subsp. tengcongensis (strain DSM 15242 / JCM 11007 / NBRC 100824 / MB4) (Thermoanaerobacter tengcongensis) protein is DNA polymerase III PolC-type.